Here is a 422-residue protein sequence, read N- to C-terminus: Putative serpin-Z8 (422 aa).

The tract at residues 369 to 393 is RCL; sequence GTVAAAATMTRMLPSGVPPPPVDFV.

This sequence belongs to the serpin family.

Probable serine protease inhibitor. In Oryza sativa subsp. japonica (Rice), this protein is Putative serpin-Z8.